Here is a 144-residue protein sequence, read N- to C-terminus: Large ribosomal subunit protein uL15 (144 aa).

Over residues 1 to 10 the composition is skewed to polar residues; that stretch reads MYLNTISPSR. Positions 1–51 are disordered; it reads MYLNTISPSRGSKHLSKRVGRGIGSGLGKTGGRGHKGQKSRSGGKVRLGFE. The span at 11–20 shows a compositional bias: basic residues; sequence GSKHLSKRVG. The span at 21–31 shows a compositional bias: gly residues; sequence RGIGSGLGKTG. Over residues 32-44 the composition is skewed to basic residues; sequence GRGHKGQKSRSGG.

This sequence belongs to the universal ribosomal protein uL15 family. Part of the 50S ribosomal subunit.

Binds to the 23S rRNA. The sequence is that of Large ribosomal subunit protein uL15 from Blochmanniella pennsylvanica (strain BPEN).